Consider the following 260-residue polypeptide: Hydroxyethylthiazole kinase 1 (260 aa).

M39 serves as a coordination point for substrate. ATP is bound by residues R115 and T160. A substrate-binding site is contributed by G187.

The protein belongs to the Thz kinase family. Mg(2+) is required as a cofactor.

It catalyses the reaction 5-(2-hydroxyethyl)-4-methylthiazole + ATP = 4-methyl-5-(2-phosphooxyethyl)-thiazole + ADP + H(+). Its pathway is cofactor biosynthesis; thiamine diphosphate biosynthesis; 4-methyl-5-(2-phosphoethyl)-thiazole from 5-(2-hydroxyethyl)-4-methylthiazole: step 1/1. In terms of biological role, catalyzes the phosphorylation of the hydroxyl group of 4-methyl-5-beta-hydroxyethylthiazole (THZ). The protein is Hydroxyethylthiazole kinase 1 of Streptococcus pneumoniae (strain 70585).